We begin with the raw amino-acid sequence, 345 residues long: S-adenosylmethionine:tRNA ribosyltransferase-isomerase (345 aa).

This sequence belongs to the QueA family. As to quaternary structure, monomer.

The protein resides in the cytoplasm. It catalyses the reaction 7-aminomethyl-7-carbaguanosine(34) in tRNA + S-adenosyl-L-methionine = epoxyqueuosine(34) in tRNA + adenine + L-methionine + 2 H(+). It participates in tRNA modification; tRNA-queuosine biosynthesis. Transfers and isomerizes the ribose moiety from AdoMet to the 7-aminomethyl group of 7-deazaguanine (preQ1-tRNA) to give epoxyqueuosine (oQ-tRNA). The polypeptide is S-adenosylmethionine:tRNA ribosyltransferase-isomerase (Helicobacter pylori (strain J99 / ATCC 700824) (Campylobacter pylori J99)).